Here is a 143-residue protein sequence, read N- to C-terminus: Transcriptional regulator MraZ (143 aa).

SpoVT-AbrB domains are found at residues 5-47 and 76-119; these read TYAP…SQRE and ASAE…DAEA.

This sequence belongs to the MraZ family. As to quaternary structure, forms oligomers.

The protein localises to the cytoplasm. Its subcellular location is the nucleoid. The sequence is that of Transcriptional regulator MraZ from Leifsonia xyli subsp. xyli (strain CTCB07).